Here is a 329-residue protein sequence, read N- to C-terminus: GTP 3',8-cyclase (329 aa).

The Radical SAM core domain maps to 1 to 229 (MNPVDYLRIS…ESTIKGNGPA (229 aa)). Arginine 8 is a GTP binding site. Cysteine 15 and cysteine 19 together coordinate [4Fe-4S] cluster. Residue tyrosine 21 participates in S-adenosyl-L-methionine binding. Cysteine 22 contacts [4Fe-4S] cluster. Arginine 60 contacts GTP. Glycine 64 is a binding site for S-adenosyl-L-methionine. Threonine 91 is a binding site for GTP. Position 115 (serine 115) interacts with S-adenosyl-L-methionine. GTP is bound at residue lysine 155. Methionine 189 is an S-adenosyl-L-methionine binding site. The [4Fe-4S] cluster site is built by cysteine 252 and cysteine 255. 257–259 (RMR) contributes to the GTP binding site. Cysteine 269 is a binding site for [4Fe-4S] cluster.

The protein belongs to the radical SAM superfamily. MoaA family. Monomer and homodimer. It depends on [4Fe-4S] cluster as a cofactor.

It catalyses the reaction GTP + AH2 + S-adenosyl-L-methionine = (8S)-3',8-cyclo-7,8-dihydroguanosine 5'-triphosphate + 5'-deoxyadenosine + L-methionine + A + H(+). It participates in cofactor biosynthesis; molybdopterin biosynthesis. Its function is as follows. Catalyzes the cyclization of GTP to (8S)-3',8-cyclo-7,8-dihydroguanosine 5'-triphosphate. This is GTP 3',8-cyclase from Rippkaea orientalis (strain PCC 8801 / RF-1) (Cyanothece sp. (strain PCC 8801)).